The chain runs to 184 residues: ATP synthase subunit b, chloroplastic (184 aa).

Residues 27–49 (LATNPINLSVVLGVLIFFGKGVL) form a helical membrane-spanning segment.

This sequence belongs to the ATPase B chain family. In terms of assembly, F-type ATPases have 2 components, F(1) - the catalytic core - and F(0) - the membrane proton channel. F(1) has five subunits: alpha(3), beta(3), gamma(1), delta(1), epsilon(1). F(0) has four main subunits: a(1), b(1), b'(1) and c(10-14). The alpha and beta chains form an alternating ring which encloses part of the gamma chain. F(1) is attached to F(0) by a central stalk formed by the gamma and epsilon chains, while a peripheral stalk is formed by the delta, b and b' chains.

Its subcellular location is the plastid. The protein localises to the chloroplast thylakoid membrane. In terms of biological role, f(1)F(0) ATP synthase produces ATP from ADP in the presence of a proton or sodium gradient. F-type ATPases consist of two structural domains, F(1) containing the extramembraneous catalytic core and F(0) containing the membrane proton channel, linked together by a central stalk and a peripheral stalk. During catalysis, ATP synthesis in the catalytic domain of F(1) is coupled via a rotary mechanism of the central stalk subunits to proton translocation. Its function is as follows. Component of the F(0) channel, it forms part of the peripheral stalk, linking F(1) to F(0). The sequence is that of ATP synthase subunit b, chloroplastic from Gossypium barbadense (Sea Island cotton).